We begin with the raw amino-acid sequence, 65 residues long: MAIDKTTLAILACPKCKGKLTYYADKDELVCRGERLAYPIDENIPVLIADKARELSSEELEKVPS.

It belongs to the UPF0434 family.

In Idiomarina loihiensis (strain ATCC BAA-735 / DSM 15497 / L2-TR), this protein is UPF0434 protein IL1511.